A 398-amino-acid polypeptide reads, in one-letter code: CCA-adding enzyme (398 aa).

Positions 32 and 35 each coordinate ATP. The CTP site is built by Gly32 and Arg35. Mg(2+)-binding residues include Asp45 and Asp47. Residues Arg116, Asp159, Arg162, Arg165, and Arg168 each coordinate ATP. The CTP site is built by Arg116, Asp159, Arg162, Arg165, and Arg168.

The protein belongs to the tRNA nucleotidyltransferase/poly(A) polymerase family. Bacterial CCA-adding enzyme type 3 subfamily. As to quaternary structure, homodimer. Mg(2+) is required as a cofactor.

The enzyme catalyses a tRNA precursor + 2 CTP + ATP = a tRNA with a 3' CCA end + 3 diphosphate. It carries out the reaction a tRNA with a 3' CCA end + 2 CTP + ATP = a tRNA with a 3' CCACCA end + 3 diphosphate. In terms of biological role, catalyzes the addition and repair of the essential 3'-terminal CCA sequence in tRNAs without using a nucleic acid template. Adds these three nucleotides in the order of C, C, and A to the tRNA nucleotide-73, using CTP and ATP as substrates and producing inorganic pyrophosphate. tRNA 3'-terminal CCA addition is required both for tRNA processing and repair. Also involved in tRNA surveillance by mediating tandem CCA addition to generate a CCACCA at the 3' terminus of unstable tRNAs. While stable tRNAs receive only 3'-terminal CCA, unstable tRNAs are marked with CCACCA and rapidly degraded. This is CCA-adding enzyme from Lactobacillus johnsonii (strain CNCM I-12250 / La1 / NCC 533).